A 91-amino-acid polypeptide reads, in one-letter code: UPF0335 protein BRADO1188 (91 aa).

This sequence belongs to the UPF0335 family.

This chain is UPF0335 protein BRADO1188, found in Bradyrhizobium sp. (strain ORS 278).